An 88-amino-acid chain; its full sequence is MTADRNMRRTVVGRVVSDKMDKTIVVLVETYKTHPLYGKRMKFSKKFKAHDENNTAKVGDIVEIMETRPLSKDKRFRLVRIVEEAVIV.

Belongs to the universal ribosomal protein uS17 family. As to quaternary structure, part of the 30S ribosomal subunit.

Functionally, one of the primary rRNA binding proteins, it binds specifically to the 5'-end of 16S ribosomal RNA. In Brevibacillus brevis (strain 47 / JCM 6285 / NBRC 100599), this protein is Small ribosomal subunit protein uS17.